We begin with the raw amino-acid sequence, 471 residues long: Tryptophanase (471 aa).

Residues lysine 5, lysine 115, and lysine 156 each carry the N6-acetyllysine modification. The residue at position 270 (lysine 270) is an N6-(pyridoxal phosphate)lysine. At lysine 450 the chain carries N6-acetyllysine.

The protein belongs to the beta-eliminating lyase family. As to quaternary structure, homotetramer. Requires pyridoxal 5'-phosphate as cofactor.

It carries out the reaction L-tryptophan + H2O = indole + pyruvate + NH4(+). Its pathway is amino-acid degradation; L-tryptophan degradation via pyruvate pathway; indole and pyruvate from L-tryptophan: step 1/1. This Escherichia coli O157:H7 protein is Tryptophanase (tnaA).